Consider the following 115-residue polypeptide: Photosystem II reaction center Psb28 protein (115 aa).

Belongs to the Psb28 family. As to quaternary structure, part of the photosystem II complex.

The protein resides in the plastid. It is found in the chloroplast thylakoid membrane. The chain is Photosystem II reaction center Psb28 protein from Phaeodactylum tricornutum (strain CCAP 1055/1).